The sequence spans 76 residues: uncharacterized protein (76 aa).

Residues 24 to 44 traverse the membrane as a helical segment; that stretch reads GAIFLVCYPLYCVVCFVSVLC.

It localises to the membrane. This is an uncharacterized protein from Schizosaccharomyces pombe (strain 972 / ATCC 24843) (Fission yeast).